The following is a 372-amino-acid chain: MNSSCLGLRRTCFLLSVTAAAVLLLLLPRGQPPAAPRRRPPPAGPSRPSPKREARPAGSDVPGDRGGGSGAAGGGRGVAGSPWPSRRVRMGPPGGSAKESLELKDIFIAVKTTRKYHKTRLELLFQTWISRARGQTFIFTDWEDRELRLKAGDHMINTNCSAVHTRQALCCKMSVEYDKFLESGQKWFCHVDDDNYVNPRTLLRLLSAFSPSQDVYVGRPSLDHPIEAADHVQSDGSKTSVKFWFATGGAGFCISRGLALKMSPWASLGNFISTAERVRLPDDCTIGYIIEGLLEVKLLHSPLFHSHLENLQRLQGESVLQQVTLSYGDPENKHNVVSVGGVFGLQQDPTRFKSVHCLLYPDTIWCPNKKMS.

The Cytoplasmic portion of the chain corresponds to 1 to 10; that stretch reads MNSSCLGLRR. A helical; Signal-anchor for type II membrane protein transmembrane segment spans residues 11–27; the sequence is TCFLLSVTAAAVLLLLL. Over 28–372 the chain is Lumenal; that stretch reads PRGQPPAAPR…TIWCPNKKMS (345 aa). The span at 30 to 48 shows a compositional bias: pro residues; the sequence is GQPPAAPRRRPPPAGPSRP. The tract at residues 30–96 is disordered; sequence GQPPAAPRRR…RVRMGPPGGS (67 aa). The span at 64–78 shows a compositional bias: gly residues; that stretch reads DRGGGSGAAGGGRGV. R120 lines the substrate pocket. Residue N159 is glycosylated (N-linked (GlcNAc...) asparagine). Disulfide bonds link C160–C171 and C189–C253. A substrate-binding site is contributed by D193. D194 is a binding site for Mn(2+). D283 is an active-site residue. H307 lines the Mn(2+) pocket. C357 and C366 are joined by a disulfide.

It belongs to the glycosyltransferase 31 family. Mn(2+) is required as a cofactor.

Its subcellular location is the golgi apparatus membrane. The enzyme catalyses 3-O-(alpha-L-fucosyl)-L-threonyl-[EGF-like domain protein] + UDP-N-acetyl-alpha-D-glucosamine = 3-O-(N-acetyl-beta-D-glucosaminyl-(1-&gt;3)-alpha-L-fucosyl)-L-threonyl-[EGF-like domain protein] + UDP + H(+). The catalysed reaction is 3-O-(alpha-L-fucosyl)-L-seryl-[EGF-like domain protein] + UDP-N-acetyl-alpha-D-glucosamine = 3-O-(N-acetyl-beta-D-glucosaminyl-(1-&gt;3)-alpha-L-fucosyl)-L-seryl-[EGF-like domain protein] + UDP + H(+). Functionally, glycosyltransferase that initiates the elongation of O-linked fucose residues attached to EGF-like repeats in the extracellular domain of Notch molecules. Plays an important role in limb outgrowth, it directs the formation and positioning of the apical ectodermal ridge (AER), one of the key organizer centers of vertebrate limb development. In Gallus gallus (Chicken), this protein is Beta-1,3-N-acetylglucosaminyltransferase radical fringe (RFNG).